A 297-amino-acid chain; its full sequence is tRNA dimethylallyltransferase (297 aa).

An ATP-binding site is contributed by 8–15; sequence GATASGKS. 10 to 15 serves as a coordination point for substrate; sequence TASGKS. The segment at 33 to 36 is interaction with substrate tRNA; the sequence is DSLS.

It belongs to the IPP transferase family. As to quaternary structure, monomer. Mg(2+) is required as a cofactor.

It catalyses the reaction adenosine(37) in tRNA + dimethylallyl diphosphate = N(6)-dimethylallyladenosine(37) in tRNA + diphosphate. Functionally, catalyzes the transfer of a dimethylallyl group onto the adenine at position 37 in tRNAs that read codons beginning with uridine, leading to the formation of N6-(dimethylallyl)adenosine (i(6)A). The protein is tRNA dimethylallyltransferase of Sulfurimonas denitrificans (strain ATCC 33889 / DSM 1251) (Thiomicrospira denitrificans (strain ATCC 33889 / DSM 1251)).